The following is a 290-amino-acid chain: Outer dense fiber protein 4 (290 aa).

Ser-28 carries the phosphoserine modification. The next 4 membrane-spanning stretches (helical) occupy residues 44–64 (AQVV…LMVF), 132–152 (ISFI…HLPY), 164–184 (LIGI…LLLF), and 201–221 (IGWS…CGIL). Residues 262–290 (ADILDPTQDDQKPLSSDNIALPPNPDTTD) are disordered.

It localises to the membrane. In terms of biological role, component of the outer dense fibers (ODF) of spermatozoa which could be involved in sperm tail structure, sperm movement and general organization of cellular cytoskeleton. The protein is Outer dense fiber protein 4 (Odf4) of Rattus norvegicus (Rat).